The sequence spans 200 residues: Nucleoside triphosphate pyrophosphatase (200 aa).

The Proton acceptor role is filled by D79.

It belongs to the Maf family. A divalent metal cation serves as cofactor.

The protein resides in the cytoplasm. It carries out the reaction a ribonucleoside 5'-triphosphate + H2O = a ribonucleoside 5'-phosphate + diphosphate + H(+). The enzyme catalyses a 2'-deoxyribonucleoside 5'-triphosphate + H2O = a 2'-deoxyribonucleoside 5'-phosphate + diphosphate + H(+). Nucleoside triphosphate pyrophosphatase. May have a dual role in cell division arrest and in preventing the incorporation of modified nucleotides into cellular nucleic acids. The chain is Nucleoside triphosphate pyrophosphatase from Legionella pneumophila (strain Lens).